The sequence spans 130 residues: Protein BLT4 (130 aa).

A signal peptide spans 1 to 25 (MARTAATKLALVPLVAAMLLVAADA). A disordered region spans residues 80–130 (VPARTTPAGPQASPPGAASASPTRSAPVSTALRSTDRTRAPHISSDRRLVG). Residues 84-110 (TTPAGPQASPPGAASASPTRSAPVSTA) show a composition bias toward low complexity. The segment covering 113-130 (STDRTRAPHISSDRRLVG) has biased composition (basic and acidic residues).

This sequence belongs to the plant LTP family. Shoot meristem.

Functionally, possible dehydrative stress responsive protein. Not shown to have lipid transfer activity. In Hordeum vulgare (Barley), this protein is Protein BLT4 (BLT4).